Here is a 276-residue protein sequence, read N- to C-terminus: Formamidopyrimidine-DNA glycosylase (276 aa).

Catalysis depends on Pro2, which acts as the Schiff-base intermediate with DNA. Residue Glu3 is the Proton donor of the active site. Catalysis depends on Lys58, which acts as the Proton donor; for beta-elimination activity. His94, Arg112, and Arg157 together coordinate DNA. Residues 242-276 (FVYDRAGEPCRVCGAPIRQIVQGQRSTYFCPNCQR) form an FPG-type zinc finger. Residue Arg266 is the Proton donor; for delta-elimination activity of the active site.

This sequence belongs to the FPG family. Monomer. It depends on Zn(2+) as a cofactor.

The catalysed reaction is Hydrolysis of DNA containing ring-opened 7-methylguanine residues, releasing 2,6-diamino-4-hydroxy-5-(N-methyl)formamidopyrimidine.. It carries out the reaction 2'-deoxyribonucleotide-(2'-deoxyribose 5'-phosphate)-2'-deoxyribonucleotide-DNA = a 3'-end 2'-deoxyribonucleotide-(2,3-dehydro-2,3-deoxyribose 5'-phosphate)-DNA + a 5'-end 5'-phospho-2'-deoxyribonucleoside-DNA + H(+). In terms of biological role, involved in base excision repair of DNA damaged by oxidation or by mutagenic agents. Acts as a DNA glycosylase that recognizes and removes damaged bases. Has a preference for oxidized purines, such as 7,8-dihydro-8-oxoguanine (8-oxoG). Has AP (apurinic/apyrimidinic) lyase activity and introduces nicks in the DNA strand. Cleaves the DNA backbone by beta-delta elimination to generate a single-strand break at the site of the removed base with both 3'- and 5'-phosphates. This is Formamidopyrimidine-DNA glycosylase from Burkholderia pseudomallei (strain 1710b).